The sequence spans 557 residues: Formate--tetrahydrofolate ligase (557 aa).

Serine 65–threonine 72 serves as a coordination point for ATP.

The protein belongs to the formate--tetrahydrofolate ligase family.

It carries out the reaction (6S)-5,6,7,8-tetrahydrofolate + formate + ATP = (6R)-10-formyltetrahydrofolate + ADP + phosphate. The protein operates within one-carbon metabolism; tetrahydrofolate interconversion. The protein is Formate--tetrahydrofolate ligase of Methylobacillus flagellatus (strain ATCC 51484 / DSM 6875 / VKM B-1610 / KT).